A 390-amino-acid chain; its full sequence is Dihydroorotase (390 aa).

H54 and H56 together coordinate Zn(2+). Substrate-binding positions include 56–58 (HIR) and N88. Zn(2+) contacts are provided by K136, H160, H197, and D259. K136 is subject to N6-carboxylysine. The active site involves D259. Residues H263 and 277–278 (PG) contribute to the substrate site.

Belongs to the metallo-dependent hydrolases superfamily. DHOase family. Class I DHOase subfamily. It depends on Zn(2+) as a cofactor.

The catalysed reaction is (S)-dihydroorotate + H2O = N-carbamoyl-L-aspartate + H(+). It participates in pyrimidine metabolism; UMP biosynthesis via de novo pathway; (S)-dihydroorotate from bicarbonate: step 3/3. Its function is as follows. Catalyzes the reversible cyclization of carbamoyl aspartate to dihydroorotate. The polypeptide is Dihydroorotase (Saccharolobus solfataricus (strain ATCC 35092 / DSM 1617 / JCM 11322 / P2) (Sulfolobus solfataricus)).